Reading from the N-terminus, the 804-residue chain is G-type lectin S-receptor-like serine/threonine-protein kinase At1g61500 (804 aa).

Residues 1 to 24 (MMTRFACLHLFTMFLFTLLSGSSS) form the signal peptide. Residues 25 to 145 (AVITTESPLS…VSERALWQSF (121 aa)) enclose the Bulb-type lectin domain. The Extracellular portion of the chain corresponds to 25–427 (AVITTESPLS…ELDGNKRKKT (403 aa)). 3 N-linked (GlcNAc...) asparagine glycosylation sites follow: Asn-54, Asn-135, and Asn-237. The 37-residue stretch at 279–315 (PKKLCDFYGACGPFGLCVMSPSPMCKCFRGFVPKSVE) folds into the EGF-like; atypical domain. 2 disulfide bridges follow: Cys-283-Cys-295 and Cys-289-Cys-303. Residues Asn-321, Asn-337, and Asn-376 are each glycosylated (N-linked (GlcNAc...) asparagine). The region spanning 334–416 (CLGNSTGEDA…GELLSIRLAR (83 aa)) is the PAN domain. 2 disulfide bridges follow: Cys-369/Cys-390 and Cys-373/Cys-379. A helical transmembrane segment spans residues 428–448 (IVASIVSLTLFMILGFTAFGV). At 449–804 (WRCRVEHIAH…GMTQSVILGR (356 aa)) the chain is on the cytoplasmic side. The Protein kinase domain occupies 491–776 (FSLSNKLGQG…DLPSPKQPTF (286 aa)). ATP contacts are provided by residues 497–505 (LGQGGFGSV) and Lys-519. Phosphoserine is present on residues Ser-525 and Ser-540. The interval 580 to 597 (RKRLEIDWPKRFDIIQGI) is caM-binding. Catalysis depends on Asp-616, which acts as the Proton acceptor. Phosphoserine is present on residues Ser-620 and Ser-633. At Thr-650 the chain carries Phosphothreonine. Residues Ser-693 and Ser-787 each carry the phosphoserine modification.

It belongs to the protein kinase superfamily. Ser/Thr protein kinase family.

It is found in the cell membrane. It catalyses the reaction L-seryl-[protein] + ATP = O-phospho-L-seryl-[protein] + ADP + H(+). The enzyme catalyses L-threonyl-[protein] + ATP = O-phospho-L-threonyl-[protein] + ADP + H(+). This Arabidopsis thaliana (Mouse-ear cress) protein is G-type lectin S-receptor-like serine/threonine-protein kinase At1g61500.